The primary structure comprises 284 residues: D-tagatose-1,6-bisphosphate aldolase subunit GatY (284 aa).

The active-site Proton donor is the Asp-82. Residues His-83 and His-180 each contribute to the Zn(2+) site. Dihydroxyacetone phosphate is bound at residue Gly-181. Position 208 (His-208) interacts with Zn(2+). Dihydroxyacetone phosphate contacts are provided by residues 209-211 and 230-233; these read GAS and NVAT.

Belongs to the class II fructose-bisphosphate aldolase family. TagBP aldolase GatY subfamily. As to quaternary structure, forms a complex with GatZ. Requires Zn(2+) as cofactor.

It catalyses the reaction D-tagatofuranose 1,6-bisphosphate = D-glyceraldehyde 3-phosphate + dihydroxyacetone phosphate. It participates in carbohydrate metabolism; D-tagatose 6-phosphate degradation; D-glyceraldehyde 3-phosphate and glycerone phosphate from D-tagatose 6-phosphate: step 2/2. Catalytic subunit of the tagatose-1,6-bisphosphate aldolase GatYZ, which catalyzes the reversible aldol condensation of dihydroxyacetone phosphate (DHAP or glycerone-phosphate) with glyceraldehyde 3-phosphate (G3P) to produce tagatose 1,6-bisphosphate (TBP). Requires GatZ subunit for full activity and stability. Is involved in the catabolism of galactitol. This chain is D-tagatose-1,6-bisphosphate aldolase subunit GatY, found in Salmonella paratyphi B (strain ATCC BAA-1250 / SPB7).